Here is a 750-residue protein sequence, read N- to C-terminus: Phosphate transporter PHO1 homolog 7 (750 aa).

The SPX domain maps to 1-298 (MKFGKDFVRQ…SRSAAKPYME (298 aa)). The Cytoplasmic segment spans residues 1-350 (MKFGKDFVRQ…KVKKEKHRIT (350 aa)). Residues 351–371 (FSTGFFVGCTVSLVVALVMFI) traverse the membrane as a helical segment. Residues 372-391 (HARNIMGAVGHKVYMETMFP) lie on the Extracellular side of the membrane. Residues 392 to 412 (LYSLFAFVVLHMIMYASNIYF) form a helical membrane-spanning segment. The Cytoplasmic portion of the chain corresponds to 413–435 (WKRYRVNYPFIFGFKEGTELGYR). A helical membrane pass occupies residues 436–456 (HVLLLSFGLGTLALCAVLINL). At 457-472 (DMEMDPNTNDYKTMTE) the chain is on the extracellular side. A helical transmembrane segment spans residues 473–493 (LLPMFILALVVAILFCPFNIF). Residues 494-622 (YRSSRVFFLM…YSFNRGNIWK (129 aa)) lie on the Cytoplasmic side of the membrane. Residues 557 to 750 (RSSDVYSTFY…NYNEEEDRDS (194 aa)) form the EXS domain. Residues 623–643 (ISAWVFSALATFYGTYWDIVF) form a helical membrane-spanning segment. Residues 644–666 (DWGLLHRPSKHLLREKLLVPHKA) lie on the Extracellular side of the membrane. The chain crosses the membrane as a helical span at residues 667-687 (VYYVAIVLNIVLRMAWLQTVL). Over 688-750 (DFNLSFLHRE…NYNEEEDRDS (63 aa)) the chain is Cytoplasmic.

This sequence belongs to the SYG1 (TC 2.A.94) family. In terms of tissue distribution, expressed in root tips, vascular cylinders of roots and filaments, leaf hydathodes, stem, receptacle and stigma apex.

It localises to the cell membrane. May transport inorganic phosphate (Pi). The polypeptide is Phosphate transporter PHO1 homolog 7 (PHO1-H7) (Arabidopsis thaliana (Mouse-ear cress)).